A 124-amino-acid polypeptide reads, in one-letter code: UPF0231 protein Shewmr4_0656 (124 aa).

The protein belongs to the UPF0231 family.

This Shewanella sp. (strain MR-4) protein is UPF0231 protein Shewmr4_0656.